A 151-amino-acid chain; its full sequence is Transcriptional regulator MraZ (151 aa).

SpoVT-AbrB domains lie at 5–52 (ATAV…PLMN) and 81–124 (ATEC…SDVE).

The protein belongs to the MraZ family. As to quaternary structure, forms oligomers.

It is found in the cytoplasm. The protein localises to the nucleoid. The sequence is that of Transcriptional regulator MraZ from Haemophilus influenzae (strain PittGG).